Consider the following 387-residue polypeptide: Aminodeoxyfutalosine deaminase (387 aa).

Residues 1-10 (MRPAYDDPRT) show a composition bias toward basic and acidic residues. The segment at 1-37 (MRPAYDDPRTTDQPITRARPPPRAARGRRLGEEPLTE) is disordered. Positions 61 and 63 each coordinate Zn(2+). Substrate-binding residues include Arg-116, Asp-183, and Gly-217. His-244 contributes to the Zn(2+) binding site. Glu-247 functions as the Proton donor in the catalytic mechanism. Asp-325 is a binding site for Zn(2+).

Belongs to the metallo-dependent hydrolases superfamily. Adenosine and AMP deaminases family. The cofactor is Zn(2+).

The catalysed reaction is 6-amino-6-deoxyfutalosine + H2O + H(+) = futalosine + NH4(+). Its pathway is quinol/quinone metabolism; menaquinone biosynthesis. Functionally, catalyzes the deamination of aminodeoxyfutalosine (AFL) into futalosine (FL), a step in the biosynthesis of menaquinone (MK, vitamin K2). The polypeptide is Aminodeoxyfutalosine deaminase (Streptomyces coelicolor (strain ATCC BAA-471 / A3(2) / M145)).